The chain runs to 84 residues: Small ribosomal subunit protein uS15 (84 aa).

This sequence belongs to the universal ribosomal protein uS15 family. Part of the 30S ribosomal subunit. Forms a bridge to the 50S subunit in the 70S ribosome, contacting the 23S rRNA.

Functionally, one of the primary rRNA binding proteins, it binds directly to 16S rRNA where it helps nucleate assembly of the platform of the 30S subunit by binding and bridging several RNA helices of the 16S rRNA. In terms of biological role, forms an intersubunit bridge (bridge B4) with the 23S rRNA of the 50S subunit in the ribosome. The sequence is that of Small ribosomal subunit protein uS15 from Fervidobacterium nodosum (strain ATCC 35602 / DSM 5306 / Rt17-B1).